We begin with the raw amino-acid sequence, 708 residues long: RNA-directed RNA polymerase catalytic subunit (708 aa).

A RdRp catalytic domain is found at 281-467 (RIKEIGMKNQ…GLNVSQKKSF (187 aa)).

In terms of assembly, the RNA polymerase is composed of three subunits: PB1, PB2 and PA.

The catalysed reaction is RNA(n) + a ribonucleoside 5'-triphosphate = RNA(n+1) + diphosphate. RNA-dependent RNA polymerase which is responsible for replication and transcription of virus segments. Binds the promoter sequence of the encapsidated viral RNA. Displays an endonuclease activity involved in cap-stealing. Cleaves cellular pre-mRNA to generate primers for viral transcription. The protein is RNA-directed RNA polymerase catalytic subunit of Infectious salmon anemia virus (isolate Atlantic salmon/Norway/810/9/99) (ISAV).